We begin with the raw amino-acid sequence, 472 residues long: Uronate isomerase (472 aa).

This sequence belongs to the metallo-dependent hydrolases superfamily. Uronate isomerase family.

It carries out the reaction D-glucuronate = D-fructuronate. The catalysed reaction is aldehydo-D-galacturonate = keto-D-tagaturonate. The protein operates within carbohydrate metabolism; pentose and glucuronate interconversion. This chain is Uronate isomerase, found in Halalkalibacterium halodurans (strain ATCC BAA-125 / DSM 18197 / FERM 7344 / JCM 9153 / C-125) (Bacillus halodurans).